A 514-amino-acid polypeptide reads, in one-letter code: 1,25-dihydroxyvitamin D(3) 24-hydroxylase, mitochondrial (514 aa).

The transit peptide at 1-35 directs the protein to the mitochondrion; that stretch reads MSCPIDKRRPLIAFLRRLRDLGQPPRSVTSKAHVK. Cys462 contributes to the heme binding site.

Belongs to the cytochrome P450 family. Requires heme as cofactor.

It localises to the mitochondrion. The catalysed reaction is calcitriol + 2 reduced [adrenodoxin] + O2 + 2 H(+) = calcitetrol + 2 oxidized [adrenodoxin] + H2O. The enzyme catalyses calcitetrol + 2 reduced [adrenodoxin] + O2 + 2 H(+) = (1S)-1,25-dihydroxy-24-oxocalciol + 2 oxidized [adrenodoxin] + 2 H2O. It carries out the reaction (1S)-1,25-dihydroxy-24-oxocalciol + 2 reduced [adrenodoxin] + O2 + 2 H(+) = (1S)-1,23,25-trihydroxy-24-oxocalciol + 2 oxidized [adrenodoxin] + H2O. It catalyses the reaction (1S)-1,23-dihydroxy-24,25,26,27-tetranorcalciol + 2 reduced [adrenodoxin] + O2 + 2 H(+) = (1S)-1-hydroxy-23-oxo-24,25,26,27-tetranorcalciol + 2 oxidized [adrenodoxin] + 2 H2O. The catalysed reaction is (1S)-1-hydroxy-23-oxo-24,25,26,27-tetranorcalciol + 2 reduced [adrenodoxin] + O2 + H(+) = calcitroate + 2 oxidized [adrenodoxin] + H2O. The enzyme catalyses calcidiol + 2 reduced [adrenodoxin] + O2 + 2 H(+) = secalciferol + 2 oxidized [adrenodoxin] + H2O. It carries out the reaction secalciferol + 2 reduced [adrenodoxin] + O2 + 2 H(+) = 25-hydroxy-24-oxocalciol + 2 oxidized [adrenodoxin] + 2 H2O. It catalyses the reaction 25-hydroxy-24-oxocalciol + 2 reduced [adrenodoxin] + O2 + 2 H(+) = 23S,25-dihydroxy-24-oxocholecalciferol + 2 oxidized [adrenodoxin] + H2O. The catalysed reaction is 20S,23-dihydroxycholecalciferol + 2 reduced [adrenodoxin] + O2 + 2 H(+) = 20S,23,25-trihydroxycholecalciferol + 2 oxidized [adrenodoxin] + H2O. The enzyme catalyses 20S,23-dihydroxycholecalciferol + 2 reduced [adrenodoxin] + O2 + 2 H(+) = 20S,23,24-trihydroxycholecalciferol + 2 oxidized [adrenodoxin] + H2O. It carries out the reaction 20S-hydroxycholecalciferol + 2 reduced [adrenodoxin] + O2 + 2 H(+) = 20S,25-dihydroxycholecalciferol + 2 oxidized [adrenodoxin] + H2O. It catalyses the reaction 20S-hydroxycholecalciferol + 2 reduced [adrenodoxin] + O2 + 2 H(+) = 20S,24S-dihydroxycholecalciferol + 2 oxidized [adrenodoxin] + H2O. The catalysed reaction is 20S-hydroxycholecalciferol + 2 reduced [adrenodoxin] + O2 + 2 H(+) = 20S,24R-dihydroxycholecalciferol + 2 oxidized [adrenodoxin] + H2O. Functionally, a cytochrome P450 monooxygenase with a key role in vitamin D catabolism and calcium homeostasis. Via C24-oxidation pathway, catalyzes the inactivation of both the vitamin D precursor calcidiol (25-hydroxyvitamin D(3)) and the active hormone calcitriol (1-alpha,25-dihydroxyvitamin D(3)). With initial hydroxylation at C-24 (via C24-oxidation pathway), performs a sequential 6-step oxidation of calcitriol leading to the formation of the biliary metabolite calcitroic acid. Hydroxylates at C-24 or C-25 other vitamin D active metabolites, such as CYP11A1-derived secosteroids 20S-hydroxycholecalciferol and 20S,23-dihydroxycholecalciferol. Mechanistically, uses molecular oxygen inserting one oxygen atom into a substrate, and reducing the second into a water molecule, with two electrons provided by NADPH via FDXR/adrenodoxin reductase and FDX1/adrenodoxin. This Mus musculus (Mouse) protein is 1,25-dihydroxyvitamin D(3) 24-hydroxylase, mitochondrial.